Here is a 312-residue protein sequence, read N- to C-terminus: DDRGK domain-containing protein 1 (312 aa).

Residues 1–2 lie on the Lumenal side of the membrane; it reads ME. Residues 3–23 form a helical membrane-spanning segment; that stretch reads LIILVGIATALLVVIITLYLL. Topologically, residues 24-312 are cytoplasmic; it reads QKKNAAPETK…ISAGGEEASS (289 aa). A compositionally biased stretch (low complexity) spans 59–79; it reads NQRNRLRQNAPAAPAGQVAPA. The disordered stretch occupies residues 59-162; that stretch reads NQRNRLRQNA…RKHQEDLEAE (104 aa). Residues 110 to 162 show a composition bias toward basic and acidic residues; it reads LDEKMGAKKRAKMEAKEQKRLQREQELHDREQRKVKEAKEEAERKHQEDLEAE.

Belongs to the DDRGK1 family. As to quaternary structure, interacts with Atg9; the interaction is transient.

The protein localises to the endoplasmic reticulum membrane. Substrate adapter for ufmylation, the covalent attachment of the ubiquitin-like modifier UFM1 to substrate proteins. Required for ufmylation of Atg9; protects the nervous system during aging, possibly by stabilizing Atg9 and supporting its function. This Drosophila yakuba (Fruit fly) protein is DDRGK domain-containing protein 1.